The sequence spans 89 residues: Small ribosomal subunit protein uS15 (89 aa).

Belongs to the universal ribosomal protein uS15 family. Part of the 30S ribosomal subunit. Forms a bridge to the 50S subunit in the 70S ribosome, contacting the 23S rRNA.

Functionally, one of the primary rRNA binding proteins, it binds directly to 16S rRNA where it helps nucleate assembly of the platform of the 30S subunit by binding and bridging several RNA helices of the 16S rRNA. Forms an intersubunit bridge (bridge B4) with the 23S rRNA of the 50S subunit in the ribosome. The sequence is that of Small ribosomal subunit protein uS15 from Chlamydia pneumoniae (Chlamydophila pneumoniae).